The chain runs to 500 residues: Glycerol kinase (500 aa).

Residue threonine 13 participates in ADP binding. ATP-binding residues include threonine 13, threonine 14, and serine 15. Threonine 13 contributes to the sn-glycerol 3-phosphate binding site. Residue arginine 17 participates in ADP binding. Positions 83, 84, 135, and 244 each coordinate sn-glycerol 3-phosphate. Positions 83, 84, 135, 244, and 245 each coordinate glycerol. Threonine 266 and glycine 309 together coordinate ADP. Residues threonine 266, glycine 309, glutamine 313, and glycine 410 each coordinate ATP. ADP-binding residues include glycine 410 and asparagine 414.

Belongs to the FGGY kinase family.

It catalyses the reaction glycerol + ATP = sn-glycerol 3-phosphate + ADP + H(+). It functions in the pathway polyol metabolism; glycerol degradation via glycerol kinase pathway; sn-glycerol 3-phosphate from glycerol: step 1/1. Its activity is regulated as follows. Inhibited by fructose 1,6-bisphosphate (FBP). Functionally, key enzyme in the regulation of glycerol uptake and metabolism. Catalyzes the phosphorylation of glycerol to yield sn-glycerol 3-phosphate. This Burkholderia ambifaria (strain ATCC BAA-244 / DSM 16087 / CCUG 44356 / LMG 19182 / AMMD) (Burkholderia cepacia (strain AMMD)) protein is Glycerol kinase.